Here is a 481-residue protein sequence, read N- to C-terminus: Cobyric acid synthase (481 aa).

The 187-residue stretch at Ala-247–Ser-433 folds into the GATase cobBQ-type domain. The Nucleophile role is filled by Cys-328. The active site involves His-425.

The protein belongs to the CobB/CobQ family. CobQ subfamily.

It participates in cofactor biosynthesis; adenosylcobalamin biosynthesis. In terms of biological role, catalyzes amidations at positions B, D, E, and G on adenosylcobyrinic A,C-diamide. NH(2) groups are provided by glutamine, and one molecule of ATP is hydrogenolyzed for each amidation. The protein is Cobyric acid synthase of Alcanivorax borkumensis (strain ATCC 700651 / DSM 11573 / NCIMB 13689 / SK2).